A 260-amino-acid chain; its full sequence is Circadian clock-controlled protein daywake (260 aa).

The signal sequence occupies residues 1–25 (MQLTGASMFLVWVGLLSWVSCRVDA).

The protein belongs to the TO family. As to expression, epidermis of newly eclosed adults.

Its function is as follows. Component of the circadian clock or downstream effector of clock function. Required for suppressing daytime sleep (siesta) under ambient environmental temperatures. Part of a heat avoidance mechanism that modulates daytime sleep behavior under different environmental temperatures to minimize the risk of heat exposure. Under cooler ambient temperatures, suppresses daytime sleep (siesta) and thus allows for longer periods of daytime activity. This chain is Circadian clock-controlled protein daywake, found in Drosophila melanogaster (Fruit fly).